The chain runs to 549 residues: CDK5RAP3 protein homolog (549 aa).

Short sequence motifs (shuffled ATG8-binding motif) lie at residues Ile-274–Asp-277, Ile-285–Asp-288, and Ile-333–Asp-336.

It belongs to the CDK5RAP3 family. Substrate adapter component of the UFM1 ribosome E3 ligase (UREL) complex. Interacts with ATG8 family proteins.

In terms of biological role, substrate adapter of E3 ligase complexes mediating ufmylation, the covalent attachment of the ubiquitin-like modifier UFM1 to substrate proteins, and which is involved in various processes, such as ribosome recycling and reticulophagy (also called ER-phagy). The polypeptide is CDK5RAP3 protein homolog (Arabidopsis thaliana (Mouse-ear cress)).